A 355-amino-acid polypeptide reads, in one-letter code: Peptide chain release factor 1 (355 aa).

An N5-methylglutamine modification is found at Q233.

Belongs to the prokaryotic/mitochondrial release factor family. In terms of processing, methylated by PrmC. Methylation increases the termination efficiency of RF1.

The protein localises to the cytoplasm. Peptide chain release factor 1 directs the termination of translation in response to the peptide chain termination codons UAG and UAA. The sequence is that of Peptide chain release factor 1 from Rickettsia typhi (strain ATCC VR-144 / Wilmington).